The chain runs to 99 residues: Aspartyl/glutamyl-tRNA(Asn/Gln) amidotransferase subunit C (99 aa).

The protein belongs to the GatC family. Heterotrimer of A, B and C subunits.

The catalysed reaction is L-glutamyl-tRNA(Gln) + L-glutamine + ATP + H2O = L-glutaminyl-tRNA(Gln) + L-glutamate + ADP + phosphate + H(+). It catalyses the reaction L-aspartyl-tRNA(Asn) + L-glutamine + ATP + H2O = L-asparaginyl-tRNA(Asn) + L-glutamate + ADP + phosphate + 2 H(+). Its function is as follows. Allows the formation of correctly charged Asn-tRNA(Asn) or Gln-tRNA(Gln) through the transamidation of misacylated Asp-tRNA(Asn) or Glu-tRNA(Gln) in organisms which lack either or both of asparaginyl-tRNA or glutaminyl-tRNA synthetases. The reaction takes place in the presence of glutamine and ATP through an activated phospho-Asp-tRNA(Asn) or phospho-Glu-tRNA(Gln). The chain is Aspartyl/glutamyl-tRNA(Asn/Gln) amidotransferase subunit C from Corynebacterium diphtheriae (strain ATCC 700971 / NCTC 13129 / Biotype gravis).